The sequence spans 420 residues: Torsin-4A (420 aa).

A helical membrane pass occupies residues 130 to 150 (CLLLFIAIVCFQIFNAIENLD). Residue 202 to 209 (GPSGVGKS) participates in ATP binding.

It belongs to the ClpA/ClpB family. Torsin subfamily.

Its subcellular location is the membrane. This chain is Torsin-4A (tor4a), found in Xenopus tropicalis (Western clawed frog).